We begin with the raw amino-acid sequence, 418 residues long: Serine/threonine-protein kinase PCRK1 (418 aa).

Positions 36 to 63 are disordered; that stretch reads GSEFNSRDVSGTSTESSMGRKNSYPPVS. A Protein kinase domain is found at 84–369; sequence FSRSVMIGEG…EVLEMVNKIV (286 aa). Residues 90-98 and Lys-118 each bind ATP; that span reads IGEGGFGCV. Asp-218 functions as the Proton acceptor in the catalytic mechanism. Phosphoserine is present on residues Ser-373, Ser-377, and Ser-385.

The protein belongs to the protein kinase superfamily. Ser/Thr protein kinase family. In terms of assembly, interacts with FLS2.

The protein resides in the cell membrane. It carries out the reaction L-seryl-[protein] + ATP = O-phospho-L-seryl-[protein] + ADP + H(+). The enzyme catalyses L-threonyl-[protein] + ATP = O-phospho-L-threonyl-[protein] + ADP + H(+). Its function is as follows. Involved in the activation of early immune responses. Plays a role in pattern-triggered immunity (PTI) induced by pathogen-associated molecular patterns (PAMPs) and damage-associated molecular patterns (DAMPs). Contributes to PTI in response to the bacterial pathogen Pseudomonas syringae pv maculicola strain ES4326. Contributes to PTI in response to the bacterial pathogen Pseudomonas syringae pv tomato strain DC3000. Functions redundantly with PCRK2 in basal resistance against bacterial pathogens and in regulation of plant immunity. Functions together with PCRK2 downstream of the PAMP receptor FLS2. Contributes to the induction of SARD1 and CBP60G, which are transcriptional activator of ICS1, an enzyme involved in salicylate (SA) biosynthesis upon pathogen attack. In Arabidopsis thaliana (Mouse-ear cress), this protein is Serine/threonine-protein kinase PCRK1.